Consider the following 585-residue polypeptide: uncharacterized protein (585 aa).

This is an uncharacterized protein from Escherichia coli (strain K12).